The chain runs to 315 residues: Ribosomal protein L11 methyltransferase (315 aa).

The S-adenosyl-L-methionine site is built by T162, G183, D205, and N248.

Belongs to the methyltransferase superfamily. PrmA family.

The protein resides in the cytoplasm. It catalyses the reaction L-lysyl-[protein] + 3 S-adenosyl-L-methionine = N(6),N(6),N(6)-trimethyl-L-lysyl-[protein] + 3 S-adenosyl-L-homocysteine + 3 H(+). Methylates ribosomal protein L11. In Enterococcus faecalis (strain ATCC 700802 / V583), this protein is Ribosomal protein L11 methyltransferase.